A 348-amino-acid chain; its full sequence is Dihydroorotase (348 aa).

Residues H17 and H19 each contribute to the Zn(2+) site. Residues 19 to 21 (HLR) and N45 each bind substrate. Residues K103, H140, and H178 each coordinate Zn(2+). K103 is modified (N6-carboxylysine). Residue H140 participates in substrate binding. L223 serves as a coordination point for substrate. Residue D251 coordinates Zn(2+). D251 is an active-site residue. Residues H255 and A267 each contribute to the substrate site.

Belongs to the metallo-dependent hydrolases superfamily. DHOase family. Class II DHOase subfamily. As to quaternary structure, homodimer. It depends on Zn(2+) as a cofactor.

The enzyme catalyses (S)-dihydroorotate + H2O = N-carbamoyl-L-aspartate + H(+). The protein operates within pyrimidine metabolism; UMP biosynthesis via de novo pathway; (S)-dihydroorotate from bicarbonate: step 3/3. In terms of biological role, catalyzes the reversible cyclization of carbamoyl aspartate to dihydroorotate. The polypeptide is Dihydroorotase (Yersinia pseudotuberculosis serotype I (strain IP32953)).